The primary structure comprises 147 residues: ATP synthase epsilon chain 2 (147 aa).

It belongs to the ATPase epsilon chain family. F-type ATPases have 2 components, CF(1) - the catalytic core - and CF(0) - the membrane proton channel. CF(1) has five subunits: alpha(3), beta(3), gamma(1), delta(1), epsilon(1). CF(0) has three main subunits: a, b and c.

It is found in the cell inner membrane. In terms of biological role, produces ATP from ADP in the presence of a proton gradient across the membrane. The protein is ATP synthase epsilon chain 2 of Photobacterium profundum (strain SS9).